The primary structure comprises 292 residues: Acetyl-coenzyme A carboxylase carboxyl transferase subunit beta (292 aa).

The 264-residue stretch at 29–292 (LWVKCSECGQ…HGVKELVQTN (264 aa)) folds into the CoA carboxyltransferase N-terminal domain. Zn(2+)-binding residues include cysteine 33, cysteine 36, cysteine 52, and cysteine 55. A C4-type zinc finger spans residues 33–55 (CSECGQVAYRKDLISNFNVCSNC).

The protein belongs to the AccD/PCCB family. As to quaternary structure, acetyl-CoA carboxylase is a heterohexamer composed of biotin carboxyl carrier protein (AccB), biotin carboxylase (AccC) and two subunits each of ACCase subunit alpha (AccA) and ACCase subunit beta (AccD). It depends on Zn(2+) as a cofactor.

The protein resides in the cytoplasm. The catalysed reaction is N(6)-carboxybiotinyl-L-lysyl-[protein] + acetyl-CoA = N(6)-biotinyl-L-lysyl-[protein] + malonyl-CoA. The protein operates within lipid metabolism; malonyl-CoA biosynthesis; malonyl-CoA from acetyl-CoA: step 1/1. Component of the acetyl coenzyme A carboxylase (ACC) complex. Biotin carboxylase (BC) catalyzes the carboxylation of biotin on its carrier protein (BCCP) and then the CO(2) group is transferred by the transcarboxylase to acetyl-CoA to form malonyl-CoA. The sequence is that of Acetyl-coenzyme A carboxylase carboxyl transferase subunit beta from Prochlorococcus marinus subsp. pastoris (strain CCMP1986 / NIES-2087 / MED4).